We begin with the raw amino-acid sequence, 69 residues long: Putative membrane protein insertion efficiency factor (69 aa).

Belongs to the UPF0161 family.

The protein resides in the cell membrane. Could be involved in insertion of integral membrane proteins into the membrane. The chain is Putative membrane protein insertion efficiency factor from Clostridium botulinum (strain 657 / Type Ba4).